The following is a 470-amino-acid chain: Cytochrome P450 monooxygenase sirC (470 aa).

A helical membrane pass occupies residues 12 to 34; it reads LRGMVVGTIMLLCYRYGLALSIL. An N-linked (GlcNAc...) asparagine glycan is attached at Asn-399. Position 410 (Cys-410) interacts with heme.

Belongs to the cytochrome P450 family. Heme is required as a cofactor.

It localises to the membrane. Its pathway is mycotoxin biosynthesis. Cytochrome P450 monooxygenase; part of the gene cluster that mediates the biosynthesis of sirodesmin PL, an epipolythiodioxopiperazine (ETP) characterized by a disulfide bridged cyclic dipeptide and that acts as a phytotoxin which is involved in the blackleg didease of canola. SirD catalyzes the O-prenylation of L-tyrosine (L-Tyr) in the presence of dimethylallyl diphosphate (DMAPP) to yield 4-O-dimethylallyl-L-Tyr, and therefore represents probably the first pathway-specific enzyme in the biosynthesis of sirodesmin PL. 4-O-dimethylallyl-L-Tyr, then undergoes condensation with L-Ser in a reaction catalyzed by the non-ribosomal peptide synthase sirP to form the diketopiperazine (DKP) backbone. Further bishydroxylation of the DKP performed by the cytochrome P450 monooxygenase sirC leads to the production of the intermediate phomamide. This step is essential to form the reactive thiol group required for toxicity of sirodesmin PL. The next steps of sirodesmin biosynthesis are not well understood yet, but some predictions could be made from intermediate compounds identification. Phomamide is converted into phomalizarine via oxidation, probably by sirT. Further oxidation, methylation (by sirM or sirN) and reduction steps convert phomalizarine to deacetyl sirodesmin. Finally, acetyltransferase sirH probably acetylates deacetyl sirodesmin to produce sirodesmin PL. In Leptosphaeria maculans (Blackleg fungus), this protein is Cytochrome P450 monooxygenase sirC.